The chain runs to 325 residues: E3 ubiquitin-protein ligase EL5 (325 aa).

Positions 1 to 29 are disordered; the sequence is MVRGVEQGGPAMDESSSSSSPSPVSAPAG. The segment covering 15 to 28 has biased composition (low complexity); that stretch reads SSSSSSPSPVSAPA. The helical transmembrane segment at 38-58 threads the bilayer; it reads IATVAAVLIVFAALTLAFVLL. The tract at residues 70 to 105 is disordered; it reads TTTSTSGRGRRPRPRRRSGSGGDGGTGGGVDPEVLR. The segment covering 77 to 87 has biased composition (basic residues); sequence RGRRPRPRRRS. The span at 88 to 99 shows a compositional bias: gly residues; sequence GSGGDGGTGGGV. The RING-type; atypical zinc finger occupies 134–176; sequence CAVCLAELEDGEEARFLPRCGHGFHAECVDMWLGSHSTCPLCR. 2 disordered regions span residues 267-289 and 303-325; these read GAAGSTSSCSCATGGDNDDGDVE and AATPARPPEAEAGARTAAAHVRN. A compositionally biased stretch (low complexity) spans 268 to 281; the sequence is AAGSTSSCSCATGG.

It is found in the cell membrane. The enzyme catalyses S-ubiquitinyl-[E2 ubiquitin-conjugating enzyme]-L-cysteine + [acceptor protein]-L-lysine = [E2 ubiquitin-conjugating enzyme]-L-cysteine + N(6)-ubiquitinyl-[acceptor protein]-L-lysine.. It functions in the pathway protein modification; protein ubiquitination. In terms of biological role, functions as an E3 ubiquitin-protein ligase in cooperation with the E2 ubiquitin conjugating enzymes UBC5A and UBC5B. Involved in root development. Required for the maintenance of cell viability after the initiation of root primordial formation. May mediate the degradation of cytotoxic proteins produced in root cells after the actions of auxin, cytokinin and jasmonic acid. Mediates 'Lys-48'-linked polyubiquitination of MBP in vitro. The polypeptide is E3 ubiquitin-protein ligase EL5 (EL5.1) (Oryza sativa subsp. japonica (Rice)).